A 554-amino-acid polypeptide reads, in one-letter code: Protein PNS1 (554 aa).

2 stretches are compositionally biased toward low complexity: residues 1-19 and 27-45; these read MSGP…NNNN and SYQM…QPQY. The disordered stretch occupies residues 1–90; the sequence is MSGPQYGAQP…TDGYGGPPPS (90 aa). The Cytoplasmic portion of the chain corresponds to 1–105; sequence MSGPQYGAQP…KVQKPKYNDW (105 aa). The span at 68–90 shows a compositional bias: pro residues; the sequence is PQGPPPNGSKPPPTDGYGGPPPS. Residues 106–126 form a helical membrane-spanning segment; sequence WAGLLFLATVAGFVAVSAISI. The Extracellular segment spans residues 127 to 153; that stretch reads HGYADNRSQNNGSLNGQRNTFGLTTHT. N-linked (GlcNAc...) asparagine glycans are attached at residues Asn132 and Asn137. The helical transmembrane segment at 154–174 threads the bilayer; that stretch reads IYLFVWVLICAIVLSYAYMWM. Residues 175–181 lie on the Cytoplasmic side of the membrane; it reads ARKFTKQ. A helical transmembrane segment spans residues 182 to 202; it reads FIYATGILNIVMGLVTALYML. The Extracellular portion of the chain corresponds to 203–206; the sequence is SRKY. Residues 207–227 traverse the membrane as a helical segment; it reads WSGGIVFLIFVVLQALFFWSC. Over 228 to 255 the chain is Cytoplasmic; sequence RSRIPFSTLMLQTAIDVSKVHGHVYLVS. The chain crosses the membrane as a helical span at residues 256–276; that stretch reads AVGGVIGTLFAAYWAITLVAV. Residues 277-297 lie on the Extracellular side of the membrane; sequence YVKFEPDPNNAACRNAGGCSS. The chain crosses the membrane as a helical span at residues 298–318; that stretch reads GKVIGLIVFITFAGYWISEWL. The Cytoplasmic portion of the chain corresponds to 319-352; the sequence is KNTIHTTVAGIYGSWYFNSRNYPTKVTRGALKRS. A helical membrane pass occupies residues 353–373; it reads LTYSFGSISLGSLFIAIINLI. Residues 374–389 are Extracellular-facing; that stretch reads RQLAQAAQQNAAQEGD. The helical transmembrane segment at 390-410 threads the bilayer; sequence ILGTILWCIFGCLIGILDWLV. At 411–451 the chain is on the cytoplasmic side; sequence EFINRYAFCHIALYGKAYFAAAKDTWKMVKDRGIDALINEC. A helical membrane pass occupies residues 452-472; that stretch reads LIGPVLTFGATFVAYACGLIA. Residues 473–487 lie on the Extracellular side of the membrane; that stretch reads YLYMVYTKPAYNDGG. The chain crosses the membrane as a helical span at residues 488 to 508; sequence GFTPVVVAFAFLIGLQVCNVF. The Cytoplasmic segment spans residues 509-554; it reads TTPLTSGIDTIFVAMAWDPEVLMRDHPDLYHRMVQVYPHVQEAIHA.

It belongs to the CTL (choline transporter-like) family.

It is found in the cell membrane. Probably involved in transport through the plasma membrane. The polypeptide is Protein PNS1 (pns-1) (Neurospora crassa (strain ATCC 24698 / 74-OR23-1A / CBS 708.71 / DSM 1257 / FGSC 987)).